The chain runs to 64 residues: Peptide Ctri9677 (64 aa).

The first 22 residues, 1 to 22, serve as a signal peptide directing secretion; it reads MKNNTILFTFLIVFLIASQIEA. Leu-36 is modified (leucine amide). Positions 40 to 64 are excised as a propeptide; that stretch reads SEDREFFDFFTDDNLAALEKALKEY.

Belongs to the non-disulfide-bridged peptide (NDBP) superfamily. Short antimicrobial peptide (group 4) family. As to expression, expressed by the venom gland.

The protein localises to the secreted. Functionally, antimicrobial peptide. The chain is Peptide Ctri9677 from Chaerilus tricostatus (Scorpion).